We begin with the raw amino-acid sequence, 334 residues long: UDP-N-acetylglucosamine 4,6-dehydratase (inverting) (334 aa).

NADP(+)-binding positions include 13 to 16 (TGSF), 37 to 42 (SRDELK), 61 to 62 (DV), alanine 81, lysine 85, and 123 to 124 (LS). Lysine 85 is a binding site for substrate. Lysine 127 is an active-site residue. NADP(+) is bound by residues tyrosine 135 and lysine 139. Asparagine 167 contacts substrate. 168-172 (VVGSR) contributes to the NADP(+) binding site. Valine 175, threonine 193, arginine 252, and glutamate 255 together coordinate substrate.

It belongs to the polysaccharide synthase family. In terms of assembly, homohexamer. Requires NADP(+) as cofactor.

The catalysed reaction is UDP-N-acetyl-alpha-D-glucosamine = UDP-2-acetamido-2,6-dideoxy-beta-L-arabino-hex-4-ulose + H2O. Functionally, catalyzes the first step in the biosynthesis of pseudaminic acid, a sialic-acid-like sugar that is used to modify flagellin. Has both C6 dehydratase and C5 epimerase activities that result in the production of both UDP-2-acetamido-2,6-dideoxy-beta-L-arabino-4-hexulose and UDP-2-acetamido-2,6-dideoxy-alpha-D-xylo-4-hexulose. The sequence is that of UDP-N-acetylglucosamine 4,6-dehydratase (inverting) (pseB) from Campylobacter jejuni subsp. jejuni serotype O:23/36 (strain 81-176).